Here is a 688-residue protein sequence, read N- to C-terminus: Polyribonucleotide nucleotidyltransferase (688 aa).

2 residues coordinate Mg(2+): aspartate 484 and aspartate 490. Positions 550–609 constitute a KH domain; it reads PTTEIFNVAPDKIVEIIGQGGRVIKEIVEKFEVKIDLNKPSGEVKIMGNKERVLKTKEFI. An S1 motif domain is found at 626–688; the sequence is DEVLEAQVKR…NKGKIALDLA (63 aa).

It belongs to the polyribonucleotide nucleotidyltransferase family. The cofactor is Mg(2+).

It localises to the cytoplasm. The catalysed reaction is RNA(n+1) + phosphate = RNA(n) + a ribonucleoside 5'-diphosphate. In terms of biological role, involved in mRNA degradation. Catalyzes the phosphorolysis of single-stranded polyribonucleotides processively in the 3'- to 5'-direction. The protein is Polyribonucleotide nucleotidyltransferase of Helicobacter pylori (strain G27).